A 304-amino-acid chain; its full sequence is Probable porphobilinogen deaminase (304 aa).

Cysteine 240 carries the post-translational modification S-(dipyrrolylmethanemethyl)cysteine.

It belongs to the HMBS family. Dipyrromethane is required as a cofactor.

The enzyme catalyses 4 porphobilinogen + H2O = hydroxymethylbilane + 4 NH4(+). Its pathway is porphyrin-containing compound metabolism; protoporphyrin-IX biosynthesis; coproporphyrinogen-III from 5-aminolevulinate: step 2/4. Its function is as follows. Tetrapolymerization of the monopyrrole PBG into the hydroxymethylbilane pre-uroporphyrinogen in several discrete steps. In Ignicoccus hospitalis (strain KIN4/I / DSM 18386 / JCM 14125), this protein is Probable porphobilinogen deaminase.